The sequence spans 301 residues: Coiled-coil domain-containing protein 69-B (301 aa).

Positions 1–43 are disordered; it reads MGSKTSKMCCPQLRKKKRQKAHKEGPSSQELNDLNAKSQGPNE. A lipid anchor (N-myristoyl glycine) is attached at G2. A compositionally biased stretch (polar residues) spans 26-41; that stretch reads PSSQELNDLNAKSQGP. 2 coiled-coil regions span residues 42–167 and 213–281; these read NELL…SILS and KSTM…NLYR.

The protein belongs to the CCDC69 family.

Its subcellular location is the cytoplasm. The protein localises to the cytoskeleton. It localises to the spindle. It is found in the midbody. May act as a scaffold to regulate the recruitment and assembly of spindle midzone components. This is Coiled-coil domain-containing protein 69-B (ccdc69-b) from Xenopus laevis (African clawed frog).